Consider the following 237-residue polypeptide: Heme oxygenase (237 aa).

Heme b is bound at residue histidine 17.

Belongs to the heme oxygenase family.

It is found in the plastid. The protein localises to the chloroplast. The catalysed reaction is heme b + 3 reduced [NADPH--hemoprotein reductase] + 3 O2 = biliverdin IXalpha + CO + Fe(2+) + 3 oxidized [NADPH--hemoprotein reductase] + 3 H2O + H(+). Its function is as follows. Catalyzes the opening of the heme ring with the release of iron. Key enzyme in the synthesis of the chromophoric part of the photosynthetic antennae. The sequence is that of Heme oxygenase (pbsA) from Guillardia theta (Cryptophyte).